The primary structure comprises 249 residues: ATP synthase subunit a (249 aa).

The next 6 membrane-spanning stretches (helical) occupy residues Y33–V53, F83–I103, L113–A133, F139–I159, V188–G208, and V216–L236.

The protein belongs to the ATPase A chain family. In terms of assembly, F-type ATPases have 2 components, CF(1) - the catalytic core - and CF(0) - the membrane proton channel. CF(1) has five subunits: alpha(3), beta(3), gamma(1), delta(1), epsilon(1). CF(0) has three main subunits: a(1), b(2) and c(9-12). The alpha and beta chains form an alternating ring which encloses part of the gamma chain. CF(1) is attached to CF(0) by a central stalk formed by the gamma and epsilon chains, while a peripheral stalk is formed by the delta and b chains.

The protein localises to the cell inner membrane. Key component of the proton channel; it plays a direct role in the translocation of protons across the membrane. The chain is ATP synthase subunit a from Bradyrhizobium diazoefficiens (strain JCM 10833 / BCRC 13528 / IAM 13628 / NBRC 14792 / USDA 110).